Consider the following 166-residue polypeptide: Interferon gamma (166 aa).

A signal peptide spans 1-23 (MNYTSFILAFQLCAILGSSTYYC). Gln24 is subject to Pyrrolidone carboxylic acid. Residues Asn39 and Asn106 are each glycosylated (N-linked (GlcNAc...) asparagine). Positions 147-166 (ANLRKRKRSQNPFRGRRALQ) are disordered. The span at 148–166 (NLRKRKRSQNPFRGRRALQ) shows a compositional bias: basic residues.

The protein belongs to the type II (or gamma) interferon family. Homodimer. Interacts with IFNGR1 (via extracellular domain); this interaction promotes IFNGR1 dimerization. In terms of tissue distribution, released primarily from activated T lymphocytes.

It localises to the secreted. Its function is as follows. Type II interferon produced by immune cells such as T-cells and NK cells that plays crucial roles in antimicrobial, antiviral, and antitumor responses by activating effector immune cells and enhancing antigen presentation. Primarily signals through the JAK-STAT pathway after interaction with its receptor IFNGR1 to affect gene regulation. Upon IFNG binding, IFNGR1 intracellular domain opens out to allow association of downstream signaling components JAK2, JAK1 and STAT1, leading to STAT1 activation, nuclear translocation and transcription of IFNG-regulated genes. Many of the induced genes are transcription factors such as IRF1 that are able to further drive regulation of a next wave of transcription. Plays a role in class I antigen presentation pathway by inducing a replacement of catalytic proteasome subunits with immunoproteasome subunits. In turn, increases the quantity, quality, and repertoire of peptides for class I MHC loading. Increases the efficiency of peptide generation also by inducing the expression of activator PA28 that associates with the proteasome and alters its proteolytic cleavage preference. Up-regulates as well MHC II complexes on the cell surface by promoting expression of several key molecules such as cathepsins B/CTSB, H/CTSH, and L/CTSL. Participates in the regulation of hematopoietic stem cells during development and under homeostatic conditions by affecting their development, quiescence, and differentiation. This chain is Interferon gamma (IFNG), found in Equus caballus (Horse).